The following is a 173-amino-acid chain: Thiol-disulfide oxidoreductase ResA (173 aa).

A helical; Signal-anchor for type II membrane protein membrane pass occupies residues 10 to 29 (VIILLILSGAVGFTLYQGYF). Residues 35–173 (MEIGKEAPNF…LEEYLKKITP (139 aa)) form the Thioredoxin domain. Cysteines 73 and 76 form a disulfide.

It belongs to the thioredoxin family. ResA subfamily.

It localises to the cell membrane. Its pathway is protein modification; cytochrome c assembly. In terms of biological role, thiol-disulfide oxidoreductase which is required in disulfide reduction during c-type cytochrome synthesis. May accept reducing equivalents from CcdA, leading to breakage of disulfide bonds in apocytochrome c; following this reduction heme can be covalently attached. The sequence is that of Thiol-disulfide oxidoreductase ResA from Bacillus cereus (strain ATCC 10987 / NRS 248).